A 460-amino-acid chain; its full sequence is Benzyl alcohol O-benzoyltransferase (460 aa).

Residues His167 and Asp382 each act as proton acceptor in the active site.

Belongs to the plant acyltransferase family.

The enzyme catalyses benzyl alcohol + benzoyl-CoA = benzyl benzoate + CoA. In terms of biological role, probably involved in the formation of volatile ester benzylbenzoate. The chain is Benzyl alcohol O-benzoyltransferase (HSR201) from Nicotiana tabacum (Common tobacco).